Reading from the N-terminus, the 453-residue chain is TATA box-binding protein-associated factor RNA polymerase I subunit A (453 aa).

Component of the transcription factor SL1/TIF-IB complex, composed of TBP and at least TAF1A, TAF1B, TAF1C and TAF1D. In the complex interacts directly with TBP, TAF1A and TAF1B. Interaction of the SL1/TIF-IB subunits with TBP excludes interaction of TBP with the transcription factor IID (TFIID) subunits. Interacts with UBFT. Interacts with CEBPA (isoform 1 and isoform 4). Part of Pol I pre-initiation complex (PIC), in which Pol I core assembles with RRN3 and promoter-bound UTBF and SL1/TIF-IB complex.

Its subcellular location is the nucleus. The protein resides in the nucleolus. In terms of biological role, component of the transcription factor SL1/TIF-IB complex, which is involved in the assembly of the PIC (pre-initiation complex) during RNA polymerase I-dependent transcription. The rate of PIC formation probably is primarily dependent on the rate of association of SL1/TIF-IB with the rDNA promoter. SL1/TIF-IB is involved in stabilization of nucleolar transcription factor 1/UBTF on rDNA. Formation of SL1/TIF-IB excludes the association of TBP with TFIID subunits. This is TATA box-binding protein-associated factor RNA polymerase I subunit A (Taf1a) from Mus musculus (Mouse).